The sequence spans 350 residues: Protein CONSERVED ONLY IN THE GREEN LINEAGE 160, chloroplastic (350 aa).

The transit peptide at 1–46 directs the protein to the chloroplast; sequence MAILSYISATSTTPPIPQDQSPNSRLPTKIILPNKKPEKWSTGVAP. The span at 7–26 shows a compositional bias: polar residues; it reads ISATSTTPPIPQDQSPNSRL. The interval 7–58 is disordered; it reads ISATSTTPPIPQDQSPNSRLPTKIILPNKKPEKWSTGVAPGEYGGPPTTTKL. Position 117 is a phosphoserine (serine 117). 4 helical membrane passes run 213–233, 239–259, 276–296, and 304–324; these read KNKIQVLTLGIGGVGLVSAYI, IALSFGAGLLGSLAYMRMLGN, ANQPRLLVPVVLVMIFNRWNA, and FMHLELIPMLVGFFTYKIATF.

It localises to the plastid. Its subcellular location is the chloroplast thylakoid membrane. In terms of biological role, facilitates the assembly of the membrane proton channel of the chloroplastic F-type ATPase. Specifically required for the efficient assembly and integration of the CF(0) subunit c into the chloroplastic ATPase complex in the thylakoid membrane. The polypeptide is Protein CONSERVED ONLY IN THE GREEN LINEAGE 160, chloroplastic (Arabidopsis thaliana (Mouse-ear cress)).